Here is a 277-residue protein sequence, read N- to C-terminus: Glutamate racemase (277 aa).

Substrate contacts are provided by residues 25–26 (DS) and 57–58 (YG). Cys89 (proton donor/acceptor) is an active-site residue. Position 90–91 (90–91 (NT)) interacts with substrate. Cys204 serves as the catalytic Proton donor/acceptor. 205–206 (TH) is a binding site for substrate.

It belongs to the aspartate/glutamate racemases family.

It carries out the reaction L-glutamate = D-glutamate. It functions in the pathway cell wall biogenesis; peptidoglycan biosynthesis. Provides the (R)-glutamate required for cell wall biosynthesis. This chain is Glutamate racemase, found in Brucella ovis (strain ATCC 25840 / 63/290 / NCTC 10512).